The chain runs to 233 residues: MTIGIIGAMEEEVELLKNSMSSVEEIVIGGAKFYIGEIASKEVVLLESGIGKVNAALGTTLMADRFKPEVIINTGSAGGMAEGLAVGDVIISDRLAYGDVDVTEFGYTYGQVPRMPAFYQGDAVLLKKAETIYREYFATSENKAVYGLVVTNDSFIMRPDQHEIIRTFFPDVKAVEMEAAAIAQVAYQFDIPFLIIRAISDLANQEATISFDEFIHLAAKQSATCIIELLKTI.

Catalysis depends on glutamate 12, which acts as the Proton acceptor. Residues glycine 78, isoleucine 156, and 177–178 (ME) each bind substrate. Aspartate 201 acts as the Proton donor in catalysis.

Belongs to the PNP/UDP phosphorylase family. MtnN subfamily.

It catalyses the reaction S-adenosyl-L-homocysteine + H2O = S-(5-deoxy-D-ribos-5-yl)-L-homocysteine + adenine. The enzyme catalyses S-methyl-5'-thioadenosine + H2O = 5-(methylsulfanyl)-D-ribose + adenine. It carries out the reaction 5'-deoxyadenosine + H2O = 5-deoxy-D-ribose + adenine. It functions in the pathway amino-acid biosynthesis; L-methionine biosynthesis via salvage pathway; S-methyl-5-thio-alpha-D-ribose 1-phosphate from S-methyl-5'-thioadenosine (hydrolase route): step 1/2. Catalyzes the irreversible cleavage of the glycosidic bond in both 5'-methylthioadenosine (MTA) and S-adenosylhomocysteine (SAH/AdoHcy) to adenine and the corresponding thioribose, 5'-methylthioribose and S-ribosylhomocysteine, respectively. Also cleaves 5'-deoxyadenosine, a toxic by-product of radical S-adenosylmethionine (SAM) enzymes, into 5-deoxyribose and adenine. This Listeria monocytogenes serovar 1/2a (strain ATCC BAA-679 / EGD-e) protein is 5'-methylthioadenosine/S-adenosylhomocysteine nucleosidase.